The sequence spans 366 residues: Cobalt-precorrin-5B C(1)-methyltransferase (366 aa).

Belongs to the CbiD family.

The enzyme catalyses Co-precorrin-5B + S-adenosyl-L-methionine = Co-precorrin-6A + S-adenosyl-L-homocysteine. The protein operates within cofactor biosynthesis; adenosylcobalamin biosynthesis; cob(II)yrinate a,c-diamide from sirohydrochlorin (anaerobic route): step 6/10. Functionally, catalyzes the methylation of C-1 in cobalt-precorrin-5B to form cobalt-precorrin-6A. The polypeptide is Cobalt-precorrin-5B C(1)-methyltransferase (Pseudomonas aeruginosa (strain LESB58)).